The chain runs to 383 residues: Opsin Rh3 (383 aa).

Residues 1-57 (MESGNVSSSLFGNVSTALRPEARLSAETRLLGWNVPPEELRHIPEHWLTYPEPPESM) lie on the Extracellular side of the membrane. Residue asparagine 13 is glycosylated (N-linked (GlcNAc...) asparagine). A helical membrane pass occupies residues 58–82 (NYLLGTLYIFFTLMSMLGNGLVIWV). Topologically, residues 83-94 (FSAAKSLRTPSN) are cytoplasmic. The chain crosses the membrane as a helical span at residues 95 to 119 (ILVINLAFCDFMMMVKTPIFIYNSF). The Extracellular portion of the chain corresponds to 120–133 (HQGYALGHLGCQIF). A disulfide bond links cysteine 130 and cysteine 207. A helical membrane pass occupies residues 134–153 (GIIGSYTGIAAGATNAFIAY). At 154–171 (DRFNVITRPMEGKMTHGK) the chain is on the cytoplasmic side. Residues 172–196 (AIAMIIFIYMYATPWVVACYTETWG) form a helical membrane-spanning segment. Residues 197–220 (RFVPEGYLTSCTFDYLTDNFDTRL) lie on the Extracellular side of the membrane. A helical transmembrane segment spans residues 221–248 (FVACIFFFSFVCPTTMITYYYSQIVGHV). Topologically, residues 249–284 (FSHEKALRDQAKKMNVESLRSNVDKNKETAEIRIAK) are cytoplasmic. Residues 285-308 (AAITICFLFFCSWTPYGVMSLIGA) form a helical membrane-spanning segment. Residues 309–316 (FGDKTLLT) are Extracellular-facing. The chain crosses the membrane as a helical span at residues 317-341 (PGATMIPACACKMVACIDPFVYAIS). The residue at position 328 (lysine 328) is an N6-(retinylidene)lysine. The Cytoplasmic portion of the chain corresponds to 342–383 (HPRYRMELQKRCPWLALNEKAPESSAVASTSTTQEPQQTTAA). The tract at residues 362–383 (APESSAVASTSTTQEPQQTTAA) is disordered. Positions 369 to 383 (ASTSTTQEPQQTTAA) are enriched in low complexity.

This sequence belongs to the G-protein coupled receptor 1 family. Opsin subfamily. In terms of processing, phosphorylated on some or all of the serine and threonine residues present in the C-terminal region.

The protein resides in the membrane. Its function is as follows. Visual pigments are the light-absorbing molecules that mediate vision. They consist of an apoprotein, opsin, covalently linked to cis-retinal. The chain is Opsin Rh3 (Rh3) from Drosophila melanogaster (Fruit fly).